The primary structure comprises 121 residues: MGRLTMALCWLLLLLLTTQACYITNCPRGGKRDVDDGLGVRPCMFCSFGQCVGPHICCGAGGCEIGTLEASTCHEENENPIPCHVFGDRCLLKHPGNVHGNCVSPGVCCTDDTCSMHVGCL.

Residues 1–20 (MGRLTMALCWLLLLLLTTQA) form the signal peptide. Cys21 and Cys26 are oxidised to a cystine. Pro27 is subject to 4-hydroxyproline; partial; in Conopressin-ba1c. The residue at position 29 (Gly29) is a Glycine amide. Cystine bridges form between Cys43-Cys83, Cys46-Cys57, Cys51-Cys73, Cys58-Cys63, Cys90-Cys108, Cys102-Cys120, and Cys109-Cys114.

Belongs to the vasopressin/oxytocin family. Expressed by the venom duct.

The protein localises to the secreted. The protein is Conopressin-conophysin of Conus bayani (Bayan's cone).